The following is a 144-amino-acid chain: Toxin MT0934 (144 aa).

Functionally, toxic component of a type II toxin-antitoxin (TA) system. Its toxic effect is neutralized by coexpression with cognate antitoxin MT0933. The chain is Toxin MT0934 from Mycobacterium tuberculosis (strain CDC 1551 / Oshkosh).